The primary structure comprises 968 residues: RNA polymerase-associated protein RapA (968 aa).

Positions 164 to 334 constitute a Helicase ATP-binding domain; the sequence is DVGRRHAPRV…FARLRLLDPN (171 aa). 177–184 lines the ATP pocket; that stretch reads DEVGLGKT. Positions 280–283 match the DEAH box motif; sequence DEAH. The Helicase C-terminal domain occupies 490-662; the sequence is RVEWLMGYLT…YLASPDETEG (173 aa).

The protein belongs to the SNF2/RAD54 helicase family. RapA subfamily. As to quaternary structure, interacts with the RNAP. Has a higher affinity for the core RNAP than for the holoenzyme. Its ATPase activity is stimulated by binding to RNAP.

In terms of biological role, transcription regulator that activates transcription by stimulating RNA polymerase (RNAP) recycling in case of stress conditions such as supercoiled DNA or high salt concentrations. Probably acts by releasing the RNAP, when it is trapped or immobilized on tightly supercoiled DNA. Does not activate transcription on linear DNA. Probably not involved in DNA repair. This Escherichia coli O127:H6 (strain E2348/69 / EPEC) protein is RNA polymerase-associated protein RapA.